Here is a 121-residue protein sequence, read N- to C-terminus: Small ribosomal subunit protein uS13 (121 aa).

The tract at residues 91–121 (HRRGLPVRGQKTKNNARTRKGPVKTVANKKK) is disordered.

This sequence belongs to the universal ribosomal protein uS13 family. Part of the 30S ribosomal subunit. Forms a loose heterodimer with protein S19. Forms two bridges to the 50S subunit in the 70S ribosome.

Its function is as follows. Located at the top of the head of the 30S subunit, it contacts several helices of the 16S rRNA. In the 70S ribosome it contacts the 23S rRNA (bridge B1a) and protein L5 of the 50S subunit (bridge B1b), connecting the 2 subunits; these bridges are implicated in subunit movement. Contacts the tRNAs in the A and P-sites. This is Small ribosomal subunit protein uS13 from Staphylococcus saprophyticus subsp. saprophyticus (strain ATCC 15305 / DSM 20229 / NCIMB 8711 / NCTC 7292 / S-41).